Reading from the N-terminus, the 224-residue chain is 2-C-methyl-D-erythritol 4-phosphate cytidylyltransferase (224 aa).

This sequence belongs to the IspD/TarI cytidylyltransferase family. IspD subfamily.

The catalysed reaction is 2-C-methyl-D-erythritol 4-phosphate + CTP + H(+) = 4-CDP-2-C-methyl-D-erythritol + diphosphate. Its pathway is isoprenoid biosynthesis; isopentenyl diphosphate biosynthesis via DXP pathway; isopentenyl diphosphate from 1-deoxy-D-xylulose 5-phosphate: step 2/6. Catalyzes the formation of 4-diphosphocytidyl-2-C-methyl-D-erythritol from CTP and 2-C-methyl-D-erythritol 4-phosphate (MEP). This is 2-C-methyl-D-erythritol 4-phosphate cytidylyltransferase from Clostridium botulinum (strain Eklund 17B / Type B).